We begin with the raw amino-acid sequence, 267 residues long: Short-chain dehydrogenase/reductase GME11361 (267 aa).

Positions 10, 36, 42, 57, 80, 129, 133, 162, and 164 each coordinate NADP(+). Tyrosine 129 (proton acceptor) is an active-site residue. The active-site Lowers pKa of active site Tyr is lysine 133.

Belongs to the short-chain dehydrogenases/reductases (SDR) family.

It participates in secondary metabolite biosynthesis. Its function is as follows. Short-chain dehydrogenase/reductase; part of the gene cluster that mediates the biosynthesis of dibenzodioxocinones such as pestalotiollide B, a novel class of inhibitors against cholesterol ester transfer protein (CEPT). The biosynthesis initiates from condensation of acetate and malonate units catalyzed by the non-reducing PKS pks8/GME11356. Pks8/GME11356 lacks a thioesterase (TE) domain, which is important to the cyclizing of the third ring of atrochrysone carboxylic acid, and the esterase GME11355 might play the role of TE and catalyzes the cyclization reaction of the C ring. The lactamase-like protein GME11357 (or other beta-lactamases in Pestalotiopsis microspora) probably hydrolyzes the thioester bond between the ACP of pks8/GME11356 and the intermediate to release atrochrysone carboxylic acid, which is spontaneously dehydrates to form endocrocin anthrone. Endocrocin anthrone is further converted to emodin via the endocrocin intermediate. Emodin is then oxidized by several enzymes such as the Baeyer-Villiger oxidase GME11358, the oxidoreductase GME11367, the short chain dehydrogenase/reductase GME11373, as well as by other oxidoreductases from the cluster, to modify the A and C rings and open the B ring, and finally yield monodictyphenone. The prenyltransferase GME11375 may catalyze the addition reaction between the C5 side chains and the carbon bone of dibenzodioxocinones. The remaining biochemical reactions to the final product dibenzodioxocinones should be methylation catalyzed by methyltransferase GME11366 and reduction and lactonization reaction catalyzed by a series of oxidordeuctases. The protein is Short-chain dehydrogenase/reductase GME11361 of Pestalotiopsis microspora.